Reading from the N-terminus, the 628-residue chain is Phosphomethylpyrimidine synthase (628 aa).

Residues Asn-225, Met-254, Tyr-283, His-319, 339–341, 380–383, and Glu-419 each bind substrate; these read SRG and DGLR. Zn(2+) is bound at residue His-423. Residue Tyr-446 coordinates substrate. A Zn(2+)-binding site is contributed by His-487. Positions 567, 570, and 575 each coordinate [4Fe-4S] cluster.

This sequence belongs to the ThiC family. In terms of assembly, homodimer. The cofactor is [4Fe-4S] cluster.

It carries out the reaction 5-amino-1-(5-phospho-beta-D-ribosyl)imidazole + S-adenosyl-L-methionine = 4-amino-2-methyl-5-(phosphooxymethyl)pyrimidine + CO + 5'-deoxyadenosine + formate + L-methionine + 3 H(+). It functions in the pathway cofactor biosynthesis; thiamine diphosphate biosynthesis. Functionally, catalyzes the synthesis of the hydroxymethylpyrimidine phosphate (HMP-P) moiety of thiamine from aminoimidazole ribotide (AIR) in a radical S-adenosyl-L-methionine (SAM)-dependent reaction. The polypeptide is Phosphomethylpyrimidine synthase (Leptothrix cholodnii (strain ATCC 51168 / LMG 8142 / SP-6) (Leptothrix discophora (strain SP-6))).